Reading from the N-terminus, the 504-residue chain is Glutamate--tRNA ligase (504 aa).

Positions 27–37 match the 'HIGH' region motif; it reads PSPTGTPHVGL. Residues 271-275 carry the 'KMSKS' region motif; the sequence is KLSKR. Position 274 (K274) interacts with ATP.

The protein belongs to the class-I aminoacyl-tRNA synthetase family. Glutamate--tRNA ligase type 1 subfamily. Monomer.

The protein localises to the cytoplasm. It catalyses the reaction tRNA(Glu) + L-glutamate + ATP = L-glutamyl-tRNA(Glu) + AMP + diphosphate. In terms of biological role, catalyzes the attachment of glutamate to tRNA(Glu) in a two-step reaction: glutamate is first activated by ATP to form Glu-AMP and then transferred to the acceptor end of tRNA(Glu). This Arthrobacter sp. (strain FB24) protein is Glutamate--tRNA ligase.